Here is a 131-residue protein sequence, read N- to C-terminus: 1,4-dihydroxy-2-naphthoyl-CoA hydrolase (131 aa).

Asp7 is an active-site residue.

Belongs to the 4-hydroxybenzoyl-CoA thioesterase family. DHNA-CoA hydrolase subfamily.

The enzyme catalyses 1,4-dihydroxy-2-naphthoyl-CoA + H2O = 1,4-dihydroxy-2-naphthoate + CoA + H(+). It participates in cofactor biosynthesis; phylloquinone biosynthesis. It functions in the pathway quinol/quinone metabolism; 1,4-dihydroxy-2-naphthoate biosynthesis; 1,4-dihydroxy-2-naphthoate from chorismate: step 7/7. In terms of biological role, catalyzes the hydrolysis of 1,4-dihydroxy-2-naphthoyl-CoA (DHNA-CoA) to 1,4-dihydroxy-2-naphthoate (DHNA), a reaction involved in phylloquinone (vitamin K1) biosynthesis. The polypeptide is 1,4-dihydroxy-2-naphthoyl-CoA hydrolase (Synechococcus sp. (strain RCC307)).